A 345-amino-acid chain; its full sequence is Tryptophan--tRNA ligase (345 aa).

ATP is bound by residues 22-24 (QPS) and 30-31 (GN). The 'HIGH' region signature appears at 23 to 31 (PSGELTIGN). Asp146 is a binding site for L-tryptophan. ATP is bound by residues 158–160 (GID), Val197, and 206–210 (KMSKS). The short motif at 206–210 (KMSKS) is the 'KMSKS' region element.

The protein belongs to the class-I aminoacyl-tRNA synthetase family. Homodimer.

The protein resides in the cytoplasm. The enzyme catalyses tRNA(Trp) + L-tryptophan + ATP = L-tryptophyl-tRNA(Trp) + AMP + diphosphate + H(+). Its function is as follows. Catalyzes the attachment of tryptophan to tRNA(Trp). The chain is Tryptophan--tRNA ligase from Photorhabdus laumondii subsp. laumondii (strain DSM 15139 / CIP 105565 / TT01) (Photorhabdus luminescens subsp. laumondii).